A 50-amino-acid chain; its full sequence is Ribosome-inactivating protein lyophyllin (50 aa).

The enzyme catalyses Endohydrolysis of the N-glycosidic bond at one specific adenosine on the 28S rRNA.. Its function is as follows. N-glycosylase that inhibits protein synthesis by depurinating ribosomal rRNA, and thus acts as a ribosomal inactivating protein (RIP). Has adenine polynucleotide glycosidase activity on the poly(A) substrate A30-ssDNA. Inhibits cell-free translation in rabbit reticulocyte lysate system with an IC(50) of 1 nM. May function in the defense response to pathogens. Displays antifungal activity against C.comatus and P.piricola, but not against R.solani, M.arachidicola and C.gossypii. Inhibits mycelial growth in P.piricola with an IC(50) of 2.5 uM. Has cytotoxic activity against the human cancer cell lines Hela, HepG2, and JAR, with IC(50) of 358.8, 489.8, and 926.9 nM respectively. It also inhibits HIV-1 reverse transcriptase activity (IC(50)=7.9 nM) and disrupts mouse embryonic development. The polypeptide is Ribosome-inactivating protein lyophyllin (Lyophyllum shimeji (Hon-shimeji)).